The sequence spans 676 residues: Symportin 1 (676 aa).

Residues 1 to 10 (MGKTRRNRVR) are compositionally biased toward basic residues. The tract at residues 1-28 (MGKTRRNRVRNRTDPIAKPVKPPTDPEL) is disordered. An ARM 1 repeat occupies 183 to 216 (TILRLLFRLISADIAPQDIYEEAISCLTTLSEDN). The disordered stretch occupies residues 325–385 (KGNQGSRESP…EDDEDDDDDS (61 aa)). Acidic residues-rich tracts occupy residues 338–354 (ADEE…DAMD) and 363–385 (EDQE…DDDS). An ARM 2 repeat occupies 420-453 (TAVPQLIRLSNLPIDSDESLTIQSHALSALNNIS).

It belongs to the nuclear import and ribosome assembly adapter family. Component of a hexameric 5S RNP precursor complex, composed of 5S RNA, RRS1, RPF2, RPL5, RPL11 and SYO1; this complex acts as a precursor for ribosome assembly.

In terms of biological role, involved in ribosomal large subunit assembly. The sequence is that of Symportin 1 from Chaetomium thermophilum (strain DSM 1495 / CBS 144.50 / IMI 039719) (Thermochaetoides thermophila).